The chain runs to 85 residues: Putative membrane protein insertion efficiency factor (85 aa).

It belongs to the UPF0161 family.

The protein resides in the cell inner membrane. In terms of biological role, could be involved in insertion of integral membrane proteins into the membrane. The protein is Putative membrane protein insertion efficiency factor of Fervidobacterium nodosum (strain ATCC 35602 / DSM 5306 / Rt17-B1).